The chain runs to 198 residues: Ion-translocating oxidoreductase complex subunit B (198 aa).

The segment at 1-28 (MIITTVYFILVAIAVLALIFGAILGFAS) is hydrophobic. The 4Fe-4S domain occupies 34–92 (EADPIVEKIDALLPQSQCGQCGYPGCKPYAEAIANGDDITKCIPGGQTVIVNIAELMGV). [4Fe-4S] cluster is bound by residues C51, C54, C59, C75, C115, C118, C121, C125, C145, C148, C151, and C155. 2 4Fe-4S ferredoxin-type domains span residues 106 to 135 (MVAF…GTNK) and 136 to 165 (AMHT…MIKV).

The protein belongs to the 4Fe4S bacterial-type ferredoxin family. RnfB subfamily. In terms of assembly, the complex is composed of six subunits: RnfA, RnfB, RnfC, RnfD, RnfE and RnfG. It depends on [4Fe-4S] cluster as a cofactor.

The protein resides in the cell inner membrane. Functionally, part of a membrane-bound complex that couples electron transfer with translocation of ions across the membrane. This is Ion-translocating oxidoreductase complex subunit B from Pasteurella multocida (strain Pm70).